A 155-amino-acid chain; its full sequence is Small ribosomal subunit protein uS7 (155 aa).

Belongs to the universal ribosomal protein uS7 family. In terms of assembly, part of the 30S ribosomal subunit. Contacts proteins S9 and S11.

Its function is as follows. One of the primary rRNA binding proteins, it binds directly to 16S rRNA where it nucleates assembly of the head domain of the 30S subunit. Is located at the subunit interface close to the decoding center, probably blocks exit of the E-site tRNA. The chain is Small ribosomal subunit protein uS7 from Pseudothermotoga lettingae (strain ATCC BAA-301 / DSM 14385 / NBRC 107922 / TMO) (Thermotoga lettingae).